The chain runs to 117 residues: Large ribosomal subunit protein bL19 (117 aa).

Belongs to the bacterial ribosomal protein bL19 family.

Functionally, this protein is located at the 30S-50S ribosomal subunit interface and may play a role in the structure and function of the aminoacyl-tRNA binding site. The chain is Large ribosomal subunit protein bL19 from Methylibium petroleiphilum (strain ATCC BAA-1232 / LMG 22953 / PM1).